A 43-amino-acid chain; its full sequence is Cytochrome b559 subunit beta (43 aa).

Residues 18-34 traverse the membrane as a helical segment; sequence WLAVHTLAIPTVFFLGA. Heme is bound at residue His-22.

The protein belongs to the PsbE/PsbF family. As to quaternary structure, heterodimer of an alpha subunit and a beta subunit. PSII is composed of 1 copy each of membrane proteins PsbA, PsbB, PsbC, PsbD, PsbE, PsbF, PsbH, PsbI, PsbJ, PsbK, PsbL, PsbM, PsbT, PsbX, PsbY, PsbZ, Psb30/Ycf12, peripheral proteins PsbO, CyanoQ (PsbQ), PsbU, PsbV and a large number of cofactors. It forms dimeric complexes. It depends on heme b as a cofactor.

It localises to the cellular thylakoid membrane. This b-type cytochrome is tightly associated with the reaction center of photosystem II (PSII). PSII is a light-driven water:plastoquinone oxidoreductase that uses light energy to abstract electrons from H(2)O, generating O(2) and a proton gradient subsequently used for ATP formation. It consists of a core antenna complex that captures photons, and an electron transfer chain that converts photonic excitation into a charge separation. The polypeptide is Cytochrome b559 subunit beta (Synechococcus sp. (strain JA-2-3B'a(2-13)) (Cyanobacteria bacterium Yellowstone B-Prime)).